The following is a 102-amino-acid chain: Small ribosomal subunit protein uS10 (102 aa).

Belongs to the universal ribosomal protein uS10 family. In terms of assembly, part of the 30S ribosomal subunit.

Involved in the binding of tRNA to the ribosomes. This is Small ribosomal subunit protein uS10 from Streptococcus sanguinis (strain SK36).